The following is a 349-amino-acid chain: NADH-quinone oxidoreductase subunit H (349 aa).

A run of 8 helical transmembrane segments spans residues 19-39 (VWTL…VAYL), 88-108 (GLFI…WAVV), 123-143 (LLFL…AGWA), 161-181 (VSYE…SASL), 202-222 (FLSW…ISGI), 249-269 (GMAF…VSIL), 284-304 (FLPD…FVFL), and 325-345 (VFIP…MSPL).

Belongs to the complex I subunit 1 family. In terms of assembly, NDH-1 is composed of 14 different subunits. Subunits NuoA, H, J, K, L, M, N constitute the membrane sector of the complex.

It localises to the cell inner membrane. It catalyses the reaction a quinone + NADH + 5 H(+)(in) = a quinol + NAD(+) + 4 H(+)(out). NDH-1 shuttles electrons from NADH, via FMN and iron-sulfur (Fe-S) centers, to quinones in the respiratory chain. The immediate electron acceptor for the enzyme in this species is believed to be ubiquinone. Couples the redox reaction to proton translocation (for every two electrons transferred, four hydrogen ions are translocated across the cytoplasmic membrane), and thus conserves the redox energy in a proton gradient. This subunit may bind ubiquinone. The sequence is that of NADH-quinone oxidoreductase subunit H from Aromatoleum aromaticum (strain DSM 19018 / LMG 30748 / EbN1) (Azoarcus sp. (strain EbN1)).